The primary structure comprises 208 residues: MSSQIKLTKNAYRLEKVKLSRLETYLPTLKLKKALLQVEVTNAIREASESIQAYEAARESIYAFAELYSVPLYVDAIANSFKIEKVEKDYENITGIEVPVIRNIILAESSYSVLDTPIWIDTLVAYSREFVINKVRSEVAAEKQRILEEELRNVSIRVNLFEKKLIPETTRMIKKIAIFLSDRSITDVGQVKMAKKKIQQRKEESECA.

It belongs to the V-ATPase D subunit family.

Produces ATP from ADP in the presence of a proton gradient across the membrane. The chain is V-type ATP synthase subunit D from Chlamydia caviae (strain ATCC VR-813 / DSM 19441 / 03DC25 / GPIC) (Chlamydophila caviae).